A 194-amino-acid polypeptide reads, in one-letter code: Large ribosomal subunit protein uL6m (194 aa).

Belongs to the universal ribosomal protein uL6 family.

The protein localises to the mitochondrion. In Prototheca wickerhamii, this protein is Large ribosomal subunit protein uL6m (RPL6).